The following is a 432-amino-acid chain: Adenylosuccinate synthetase (432 aa).

GTP contacts are provided by residues 13 to 19 (GDEGKGK) and 41 to 43 (GHT). Catalysis depends on Asp-14, which acts as the Proton acceptor. Mg(2+) is bound by residues Asp-14 and Gly-41. Residues 14–17 (DEGK), 39–42 (NAGH), Thr-130, Arg-144, Gln-225, Thr-240, and Arg-304 each bind IMP. His-42 functions as the Proton donor in the catalytic mechanism. 300–306 (ATTGRRR) provides a ligand contact to substrate. GTP-binding positions include Arg-306, 332 to 334 (KLD), and 415 to 417 (STG).

Belongs to the adenylosuccinate synthetase family. In terms of assembly, homodimer. Mg(2+) is required as a cofactor.

The protein localises to the cytoplasm. It carries out the reaction IMP + L-aspartate + GTP = N(6)-(1,2-dicarboxyethyl)-AMP + GDP + phosphate + 2 H(+). Its pathway is purine metabolism; AMP biosynthesis via de novo pathway; AMP from IMP: step 1/2. In terms of biological role, plays an important role in the de novo pathway of purine nucleotide biosynthesis. Catalyzes the first committed step in the biosynthesis of AMP from IMP. The sequence is that of Adenylosuccinate synthetase from Serratia proteamaculans (strain 568).